The chain runs to 257 residues: tRNA (guanine-N(7)-)-methyltransferase (257 aa).

Residues 1–12 (MARDSEDQDMET) are compositionally biased toward acidic residues. The segment at 1-25 (MARDSEDQDMETETNGAAEGLDPTS) is disordered. S-adenosyl-L-methionine contacts are provided by residues Gly80, 103–104 (EI), 138–139 (NA), and Leu158. Residue Asp161 is part of the active site. 236–238 (SEE) serves as a coordination point for S-adenosyl-L-methionine.

This sequence belongs to the class I-like SAM-binding methyltransferase superfamily. TrmB family.

It is found in the nucleus. It catalyses the reaction guanosine(46) in tRNA + S-adenosyl-L-methionine = N(7)-methylguanosine(46) in tRNA + S-adenosyl-L-homocysteine. The protein operates within tRNA modification; N(7)-methylguanine-tRNA biosynthesis. Functionally, catalyzes the formation of N(7)-methylguanine at position 46 (m7G46) in tRNA. The protein is tRNA (guanine-N(7)-)-methyltransferase of Drosophila ananassae (Fruit fly).